Reading from the N-terminus, the 103-residue chain is Co-chaperonin GroES (103 aa).

Belongs to the GroES chaperonin family. As to quaternary structure, heptamer of 7 subunits arranged in a ring. Interacts with the chaperonin GroEL.

It localises to the cytoplasm. Functionally, together with the chaperonin GroEL, plays an essential role in assisting protein folding. The GroEL-GroES system forms a nano-cage that allows encapsulation of the non-native substrate proteins and provides a physical environment optimized to promote and accelerate protein folding. GroES binds to the apical surface of the GroEL ring, thereby capping the opening of the GroEL channel. This Nostoc punctiforme (strain ATCC 29133 / PCC 73102) protein is Co-chaperonin GroES.